The following is a 421-amino-acid chain: UV-B-induced protein At3g17800, chloroplastic (421 aa).

Disordered regions lie at residues 1-40 and 74-95; these read MDAL…RSGS and VRAS…IAPL. Residues 1 to 75 constitute a chloroplast transit peptide; that stretch reads MDALTSSLVR…AKTRRSFVVR (75 aa). Positions 16 to 28 are enriched in polar residues; it reads SRTSDNGSGSMFL. A compositionally biased stretch (low complexity) spans 74–88; it reads VRASSASNDASSGSS.

The protein localises to the plastid. It localises to the chloroplast. The polypeptide is UV-B-induced protein At3g17800, chloroplastic (Arabidopsis thaliana (Mouse-ear cress)).